A 209-amino-acid polypeptide reads, in one-letter code: Large ribosomal subunit protein uL3 (209 aa).

Belongs to the universal ribosomal protein uL3 family. As to quaternary structure, part of the 50S ribosomal subunit. Forms a cluster with proteins L14 and L19.

Its function is as follows. One of the primary rRNA binding proteins, it binds directly near the 3'-end of the 23S rRNA, where it nucleates assembly of the 50S subunit. This Desulfotalea psychrophila (strain LSv54 / DSM 12343) protein is Large ribosomal subunit protein uL3.